Consider the following 453-residue polypeptide: Allantoinase (453 aa).

Zn(2+)-binding residues include His-59, His-61, Lys-146, His-186, His-242, and Asp-315. Lys-146 is subject to N6-carboxylysine.

Belongs to the metallo-dependent hydrolases superfamily. Allantoinase family. Homotetramer. It depends on Zn(2+) as a cofactor. Carboxylation allows a single lysine to coordinate two zinc ions.

The catalysed reaction is (S)-allantoin + H2O = allantoate + H(+). It participates in nitrogen metabolism; (S)-allantoin degradation; allantoate from (S)-allantoin: step 1/1. In terms of biological role, catalyzes the conversion of allantoin (5-ureidohydantoin) to allantoic acid by hydrolytic cleavage of the five-member hydantoin ring. The sequence is that of Allantoinase from Salmonella gallinarum (strain 287/91 / NCTC 13346).